Reading from the N-terminus, the 324-residue chain is Acetyl-coenzyme A carboxylase carboxyl transferase subunit alpha (324 aa).

One can recognise a CoA carboxyltransferase C-terminal domain in the interval Lys37–Lys291.

Belongs to the AccA family. Acetyl-CoA carboxylase is a heterohexamer composed of biotin carboxyl carrier protein (AccB), biotin carboxylase (AccC) and two subunits each of ACCase subunit alpha (AccA) and ACCase subunit beta (AccD).

Its subcellular location is the cytoplasm. It carries out the reaction N(6)-carboxybiotinyl-L-lysyl-[protein] + acetyl-CoA = N(6)-biotinyl-L-lysyl-[protein] + malonyl-CoA. It functions in the pathway lipid metabolism; malonyl-CoA biosynthesis; malonyl-CoA from acetyl-CoA: step 1/1. Its function is as follows. Component of the acetyl coenzyme A carboxylase (ACC) complex. First, biotin carboxylase catalyzes the carboxylation of biotin on its carrier protein (BCCP) and then the CO(2) group is transferred by the carboxyltransferase to acetyl-CoA to form malonyl-CoA. The protein is Acetyl-coenzyme A carboxylase carboxyl transferase subunit alpha of Chlamydia trachomatis serovar L2 (strain ATCC VR-902B / DSM 19102 / 434/Bu).